The following is a 203-amino-acid chain: EVTKPETINYRTLKPEMDGLFCERIFGPAKDWECHCGKYKRVRYKGIVCERCGVEVTESKVRRHRMGYIKLAAPVTHVWYLKGIPSYMSIILDMPLRDVEQIVYFNAYVVLDPGNAQNLSYKQLLTEDQWLEIEEQIYGEDSELLGIEVGIGAEAVKRLLEEVDKTSEAEKLRSEIANCKGQKRAKLIKRLRVIDNFVATGSR.

4 residues coordinate Zn(2+): Cys34, Cys36, Cys49, and Cys52.

It belongs to the RNA polymerase beta' chain family. RpoC1 subfamily. In terms of assembly, in cyanobacteria the RNAP catalytic core is composed of 2 alpha, 1 beta, 1 beta', 1 gamma and 1 omega subunit. When a sigma factor is associated with the core the holoenzyme is formed, which can initiate transcription. Zn(2+) is required as a cofactor.

The catalysed reaction is RNA(n) + a ribonucleoside 5'-triphosphate = RNA(n+1) + diphosphate. Functionally, DNA-dependent RNA polymerase catalyzes the transcription of DNA into RNA using the four ribonucleoside triphosphates as substrates. This Prochloron sp protein is DNA-directed RNA polymerase subunit gamma (rpoC1).